The chain runs to 367 residues: Phosphoribosylaminoimidazole-succinocarboxamide synthase (367 aa).

Belongs to the SAICAR synthetase family.

The catalysed reaction is 5-amino-1-(5-phospho-D-ribosyl)imidazole-4-carboxylate + L-aspartate + ATP = (2S)-2-[5-amino-1-(5-phospho-beta-D-ribosyl)imidazole-4-carboxamido]succinate + ADP + phosphate + 2 H(+). It functions in the pathway purine metabolism; IMP biosynthesis via de novo pathway; 5-amino-1-(5-phospho-D-ribosyl)imidazole-4-carboxamide from 5-amino-1-(5-phospho-D-ribosyl)imidazole-4-carboxylate: step 1/2. The sequence is that of Phosphoribosylaminoimidazole-succinocarboxamide synthase from Shewanella sp. (strain MR-7).